Here is a 513-residue protein sequence, read N- to C-terminus: Gluconokinase (513 aa).

ATP contacts are provided by residues lysine 16, threonine 261, glycine 300, and 412–416 (GFARS).

Belongs to the FGGY kinase family.

It carries out the reaction D-gluconate + ATP = 6-phospho-D-gluconate + ADP + H(+). The protein operates within carbohydrate acid metabolism; D-gluconate degradation. Its activity is regulated as follows. Catabolite repression by gluconate. In Bacillus licheniformis, this protein is Gluconokinase (gntK).